Consider the following 247-residue polypeptide: 5'-nucleotidase SurE (247 aa).

A divalent metal cation-binding residues include aspartate 8, aspartate 9, serine 39, and asparagine 91.

Belongs to the SurE nucleotidase family. A divalent metal cation is required as a cofactor.

It localises to the cytoplasm. The catalysed reaction is a ribonucleoside 5'-phosphate + H2O = a ribonucleoside + phosphate. Its function is as follows. Nucleotidase that shows phosphatase activity on nucleoside 5'-monophosphates. This chain is 5'-nucleotidase SurE, found in Nitrosomonas eutropha (strain DSM 101675 / C91 / Nm57).